The following is a 418-amino-acid chain: Actin-related protein 3 (418 aa).

A2 bears the N-acetylalanine mark. Residues K240, K244, K251, and K254 each carry the N6-acetyllysine modification.

It belongs to the actin family. ARP3 subfamily. As to quaternary structure, component of the Arp2/3 complex composed of ACTR2/ARP2, ACTR3/ARP3, ARPC1B/p41-ARC, ARPC2/p34-ARC, ARPC3/p21-ARC, ARPC4/p20-ARC and ARPC5/p16-ARC. Interacts with WHDC1. Interacts weakly with MEFV. Interacts with AVIL.

It localises to the cytoplasm. The protein localises to the cytoskeleton. It is found in the cell projection. The protein resides in the nucleus. In terms of biological role, ATP-binding component of the Arp2/3 complex, a multiprotein complex that mediates actin polymerization upon stimulation by nucleation-promoting factor (NPF). The Arp2/3 complex mediates the formation of branched actin networks in the cytoplasm, providing the force for cell motility. Seems to contact the pointed end of the daughter actin filament. In podocytes, required for the formation of lamellipodia downstream of AVIL and PLCE1 regulation. In addition to its role in the cytoplasmic cytoskeleton, the Arp2/3 complex also promotes actin polymerization in the nucleus, thereby regulating gene transcription and repair of damaged DNA. The Arp2/3 complex promotes homologous recombination (HR) repair in response to DNA damage by promoting nuclear actin polymerization, leading to drive motility of double-strand breaks (DSBs). Plays a role in ciliogenesis. The polypeptide is Actin-related protein 3 (ACTR3) (Bos taurus (Bovine)).